The primary structure comprises 260 residues: NifU-like protein C1709.19c (260 aa).

The tract at residues 161 to 231 (IKELIETSIR…IPEVENVVQV (71 aa)) is nifU.

It belongs to the NifU family.

This Schizosaccharomyces pombe (strain 972 / ATCC 24843) (Fission yeast) protein is NifU-like protein C1709.19c.